A 226-amino-acid polypeptide reads, in one-letter code: Triosephosphate isomerase (226 aa).

Asparagine 13–lysine 15 serves as a coordination point for substrate. Catalysis depends on histidine 97, which acts as the Electrophile. The active-site Proton acceptor is the glutamate 145. Residues isoleucine 150, glycine 185, and alanine 206–serine 207 contribute to the substrate site.

The protein belongs to the triosephosphate isomerase family. In terms of assembly, homotetramer; dimer of dimers.

The protein resides in the cytoplasm. The enzyme catalyses D-glyceraldehyde 3-phosphate = dihydroxyacetone phosphate. It participates in carbohydrate biosynthesis; gluconeogenesis. The protein operates within carbohydrate degradation; glycolysis; D-glyceraldehyde 3-phosphate from glycerone phosphate: step 1/1. In terms of biological role, involved in the gluconeogenesis. Catalyzes stereospecifically the conversion of dihydroxyacetone phosphate (DHAP) to D-glyceraldehyde-3-phosphate (G3P). The polypeptide is Triosephosphate isomerase (Methanobacterium bryantii).